Reading from the N-terminus, the 670-residue chain is DNA ligase (670 aa).

NAD(+) is bound by residues 32-36 (DAYYD), 81-82 (SL), and glutamate 110. Lysine 112 functions as the N6-AMP-lysine intermediate in the catalytic mechanism. Residues arginine 133, glutamate 170, lysine 289, and lysine 313 each contribute to the NAD(+) site. The Zn(2+) site is built by cysteine 407, cysteine 410, cysteine 425, and cysteine 431. A BRCT domain is found at 590–670 (EDELRLKGQT…ELLVFLGLAG (81 aa)).

The protein belongs to the NAD-dependent DNA ligase family. LigA subfamily. Requires Mg(2+) as cofactor. Mn(2+) serves as cofactor.

It catalyses the reaction NAD(+) + (deoxyribonucleotide)n-3'-hydroxyl + 5'-phospho-(deoxyribonucleotide)m = (deoxyribonucleotide)n+m + AMP + beta-nicotinamide D-nucleotide.. In terms of biological role, DNA ligase that catalyzes the formation of phosphodiester linkages between 5'-phosphoryl and 3'-hydroxyl groups in double-stranded DNA using NAD as a coenzyme and as the energy source for the reaction. It is essential for DNA replication and repair of damaged DNA. In Shewanella denitrificans (strain OS217 / ATCC BAA-1090 / DSM 15013), this protein is DNA ligase.